The chain runs to 255 residues: Protein C activator (255 aa).

A signal peptide spans 1–18; it reads MVLIRVLANLLILHLSYA. A propeptide spanning residues 19-24 is cleaved from the precursor; that stretch reads QKSSEL. The region spanning 25-246 is the Peptidase S1 domain; the sequence is VIGGDECNIN…YTDWIQSIIS (222 aa). 6 disulfides stabilise this stretch: Cys31–Cys162, Cys49–Cys65, Cys97–Cys253, Cys141–Cys207, Cys173–Cys186, and Cys197–Cys222. N-linked (GlcNAc...) asparagine glycosylation is present at Asn45. His64 (charge relay system) is an active-site residue. Asn102 carries N-linked (GlcNAc...) asparagine glycosylation. The active-site Charge relay system is Asp109. The N-linked (GlcNAc...) asparagine glycan is linked to Asn153. The active-site Charge relay system is the Ser201.

It belongs to the peptidase S1 family. Snake venom subfamily. In terms of assembly, monomer. As to expression, expressed by the venom gland.

Its subcellular location is the secreted. Functionally, snake venom serine protease that selectively cleaves the heavy chain of protein C (PROC). This activation is thrombomodulin-independent. The chain is Protein C activator from Agkistrodon piscivorus leucostoma (Western cottonmouth).